Consider the following 735-residue polypeptide: Urea active transporter (735 aa).

Topologically, residues 1–14 (MGEFKPPLPQGAGY) are cytoplasmic. Residues 15 to 35 (AIVLGLGAVFAGMMVLTTYLL) traverse the membrane as a helical segment. Residues 36-85 (KRYQKEIITAEEFTTAGRSVKTGLVAAAVVSSWIWCSTLLTSSTKEYADG) are Extracellular-facing. A helical transmembrane segment spans residues 86–106 (IFGGYAYAAGACFQIIAFAIL). The Cytoplasmic portion of the chain corresponds to 107–130 (AIKTKQMAPNAHTYLELVRTRYGK). A helical membrane pass occupies residues 131–151 (IGHGCYLFYAIATNILVTSML). Topologically, residues 152-166 (LTSGSAVFSDLTGMN) are extracellular. The helical transmembrane segment at 167-187 (TIASCFLLPVGVVVYTLFGGI) threads the bilayer. At 188–189 (KA) the chain is on the cytoplasmic side. A helical transmembrane segment spans residues 190 to 210 (TFLTDYMHTCVIIIIVLVFAF). Over 211 to 253 (KVYATSDVLGSPGKVYDLVREAAKRHPVDGNYQGEYMTMTSKS) the chain is Extracellular. A helical membrane pass occupies residues 254-274 (AGILLIINLIGNFGTVFLDNG). The Cytoplasmic portion of the chain corresponds to 275–295 (YWNKAISASPAASLKAYAIGG). A helical transmembrane segment spans residues 296–316 (LAWFAVPSLISLTMGLACLAV). At 317–343 (ETSPNFPTYPDPLTSFQANSGLVLPAA) the chain is on the extracellular side. Residues 344–364 (AIAIMGKGGAVASLLMIFMAV) form a helical membrane-spanning segment. Topologically, residues 365-403 (TSAMSAELIAVSSVFTYDIYREYIDPRASGKKLIYTSHV) are cytoplasmic. Residues 404–424 (ACIFFGLAMSGFSVGLYYGGI) form a helical membrane-spanning segment. Residue Ser425 is a topological domain, extracellular. Residues 426–446 (MGYIYEMMGIIISSAVLPVVL) traverse the membrane as a helical segment. The Cytoplasmic segment spans residues 447-454 (TLCSKDMN). Residues 455 to 475 (LVAAVVSPILGTGLAIMSWLV) form a helical membrane-spanning segment. Over 476 to 496 (CTKSLYKELTVDTTFMDYPML) the chain is Extracellular. Residues 497-517 (TGNLVALLSPAIFIPILTYVF) traverse the membrane as a helical segment. The Cytoplasmic portion of the chain corresponds to 518-618 (KPQNFDWEKM…EQRELARGLK (101 aa)). Positions 553-572 (ANDKEQEEETNSLVSDSEKN) are disordered. The helical transmembrane segment at 619-639 (IAYFLCVFFALAFLVVWPMPM) threads the bilayer. At 640–650 (YGSKYIFSKKF) the chain is on the extracellular side. The helical transmembrane segment at 651–671 (FTGWVVVMIIWLFFSAFAVCI) threads the bilayer. Residues 672–735 (YPLWEGRHGI…SHFGQVDEII (64 aa)) are Cytoplasmic-facing.

It belongs to the sodium:solute symporter (SSF) (TC 2.A.21) family. May polymerize.

It is found in the membrane. Functionally, required for active transport of urea. The polypeptide is Urea active transporter (DUR3) (Saccharomyces cerevisiae (strain ATCC 204508 / S288c) (Baker's yeast)).